The chain runs to 203 residues: MLKIGLTGSIGMGKSTVGKLFAEAGIPLNDSDAVVHNLYAGEAAPLVNAAFPGTMKDGAVDRHELGRQLALDPEGFKRLEAIVHPLVRKREMEFLAKQQADGAEMVLLDIPLLFETGAWERVDVIVVVSTDSQIQRQRVLAREDMTEEKFDMILSRQTPDAEKRRRADYLVDTSHSIAETRAQVLEIIAELKMRIAKGDFRNA.

The DPCK domain occupies 3–202 (KIGLTGSIGM…MRIAKGDFRN (200 aa)). 11–16 (GMGKST) lines the ATP pocket.

It belongs to the CoaE family.

It is found in the cytoplasm. The catalysed reaction is 3'-dephospho-CoA + ATP = ADP + CoA + H(+). Its pathway is cofactor biosynthesis; coenzyme A biosynthesis; CoA from (R)-pantothenate: step 5/5. Its function is as follows. Catalyzes the phosphorylation of the 3'-hydroxyl group of dephosphocoenzyme A to form coenzyme A. This chain is Dephospho-CoA kinase, found in Rhizobium etli (strain ATCC 51251 / DSM 11541 / JCM 21823 / NBRC 15573 / CFN 42).